The following is a 536-amino-acid chain: Beta-hexosaminidase subunit beta (536 aa).

The signal sequence occupies residues 1-31 (MPQSPRSAPGLLLLQALVSLVSLALVAPARL). A glycan (N-linked (GlcNAc...) asparagine) is linked at asparagine 63. The cysteines at positions 70 and 116 are disulfide-linked. 2 N-linked (GlcNAc...) asparagine glycosylation sites follow: asparagine 169 and asparagine 306. 2 cysteine pairs are disulfide-bonded: cysteine 288/cysteine 339 and cysteine 513/cysteine 530. Glutamate 334 (proton donor) is an active-site residue.

Belongs to the glycosyl hydrolase 20 family. There are 3 forms of beta-hexosaminidase: hexosaminidase A is a heterodimer composed of one subunit alpha and one subunit beta (chain A and B); hexosaminidase B is a homodimer of two beta subunits (two chains A and B); hexosaminidase S is a homodimer of two alpha subunits. The composition of the dimer (isozyme A versus isozyme S) has a significant effect on the substrate specificity of the alpha subunit active site.

The protein resides in the lysosome. The protein localises to the cytoplasmic vesicle. Its subcellular location is the secretory vesicle. It is found in the cortical granule. The catalysed reaction is Hydrolysis of terminal non-reducing N-acetyl-D-hexosamine residues in N-acetyl-beta-D-hexosaminides.. It carries out the reaction N-acetyl-beta-D-galactosaminyl-(1-&gt;4)-beta-D-3-sulfogalactosyl-(1-&gt;4)-beta-D-glucosyl-(1&lt;-&gt;1')-ceramide + H2O = a beta-D-3-sulfogalactosyl-(1-&gt;4)-beta-D-glucosyl-(1&lt;-&gt;1')-ceramide + N-acetyl-beta-D-galactosamine. It catalyses the reaction a ganglioside GM2 (d18:1(4E)) + H2O = a ganglioside GM3 (d18:1(4E)) + N-acetyl-beta-D-galactosamine. The enzyme catalyses a ganglioside GM2 + H2O = a ganglioside GM3 + N-acetyl-beta-D-galactosamine. The catalysed reaction is beta-D-GalNAc-(1-&gt;4)-alpha-L-IdoA-(1-&gt;3)-beta-D-GalNAc-4-sulfate-(1-&gt;4)-alpha-L-IdoA-(1-&gt;3)-D-GalNAc-4-sulfate + H2O = alpha-L-IdoA-(1-&gt;3)-beta-D-GalNAc-4-sulfate-(1-&gt;4)-alpha-L-IdoA-(1-&gt;3)-D-GalNAc-4-sulfate + N-acetyl-D-galactosamine. It carries out the reaction N-acetyl-beta-D-6-sulfogalactosaminyl-(1-&gt;4)-alpha-L-iduronyl-(1-&gt;3)-N-acetyl-D-6-sulfogalactosamine + H2O = alpha-L-iduronyl-(1-&gt;3)-N-acetyl-D-6-sulfogalactosamine + N-acetyl-D-6-sulfogalactosamine. Its activity is regulated as follows. Addition of GM2A stimulates the hydrolysis of sulfated glycosphingolipid SM2 and the ganglioside GM2. Its function is as follows. Hydrolyzes the non-reducing end N-acetyl-D-hexosamine and/or sulfated N-acetyl-D-hexosamine of glycoconjugates, such as the oligosaccharide moieties from proteins and neutral glycolipids, or from certain mucopolysaccharides. The isozyme B does not hydrolyze each of these substrates, however hydrolyzes efficiently neutral oligosaccharide. Only the isozyme A is responsible for the degradation of GM2 gangliosides in the presence of GM2A. During fertilization is responsible, at least in part, for the zona block to polyspermy. Present in the cortical granules of non-activated oocytes, is exocytosed during the cortical reaction in response to oocyte activation and inactivates the sperm galactosyltransferase-binding site, accounting for the block in sperm binding to the zona pellucida. This chain is Beta-hexosaminidase subunit beta, found in Mus musculus (Mouse).